The following is a 148-amino-acid chain: Large ribosomal subunit protein uL15 (148 aa).

Positions 1 to 30 (MSTHKKKTRKLRGHVSHGHGRIGKHRKHPG) are enriched in basic residues. Residues 1–37 (MSTHKKKTRKLRGHVSHGHGRIGKHRKHPGGRGNAGG) form a disordered region.

Belongs to the universal ribosomal protein uL15 family.

This is Large ribosomal subunit protein uL15 (RpL27A) from Tenebrio molitor (Yellow mealworm beetle).